We begin with the raw amino-acid sequence, 274 residues long: MNKTAIALLALLASSASLAATPWQKITQPVPGSAQSIGSFSNGCIVGADTLPIQSEHYQVMRTDQRRYFGHPDLVMFIQRLSSQVSNLGMGTVLIGDMGMPAGGRFNGGHASHQTGLDVDIFLQLPKTRWTSAQLLRPQALDLVSRDGKHVVSTLWKPEIFSLIKLAAQDKDVTRIFVNPAIKQQLCLDAGTDRDWLRKVRPWFQHRAHMHVRLRCPADSLECEDQPLPPPGDGCGAELQSWFAPPKPGTTKPEKKTPPPLPPSCQALLDEHVI.

The N-terminal stretch at 1-19 (MNKTAIALLALLASSASLA) is a signal peptide. 3 cysteine pairs are disulfide-bonded: Cys44–Cys265, Cys187–Cys235, and Cys216–Cys223. The Zn(2+) site is built by His110, His113, Asp120, Asp147, His150, and His211. Residues 228-265 (LPPPGDGCGAELQSWFAPPKPGTTKPEKKTPPPLPPSC) form a disordered region.

Belongs to the peptidase M74 family. Dimer. Zn(2+) serves as cofactor.

The protein resides in the periplasm. Functionally, murein endopeptidase that cleaves the D-alanyl-meso-2,6-diamino-pimelyl amide bond that connects peptidoglycan strands. Likely plays a role in the removal of murein from the sacculus. The polypeptide is Penicillin-insensitive murein endopeptidase (Shigella boydii serotype 18 (strain CDC 3083-94 / BS512)).